Reading from the N-terminus, the 85-residue chain is UPF0291 protein SAK_0343 (85 aa).

Residues 58–85 are disordered; the sequence is GNDVTPEKLRQVQREKGLHGRSLDDPNS. Basic and acidic residues predominate over residues 62-85; sequence TPEKLRQVQREKGLHGRSLDDPNS.

This sequence belongs to the UPF0291 family.

It localises to the cytoplasm. This is UPF0291 protein SAK_0343 from Streptococcus agalactiae serotype Ia (strain ATCC 27591 / A909 / CDC SS700).